The primary structure comprises 257 residues: Putative phosphatase YkrA (257 aa).

The active-site Nucleophile is the D9. D9 is a Mg(2+) binding site. I10 is a phosphate binding site. D11 serves as a coordination point for Mg(2+). Residues 43–44 and K183 contribute to the phosphate site; that span reads SG. Position 206 (D206) interacts with Mg(2+). Position 209 (N209) interacts with phosphate.

Belongs to the HAD-like hydrolase superfamily. Cof family. Mg(2+) serves as cofactor.

This chain is Putative phosphatase YkrA (ykrA), found in Bacillus subtilis (strain 168).